Here is an 88-residue protein sequence, read N- to C-terminus: Small ribosomal subunit protein uS17 (88 aa).

The protein belongs to the universal ribosomal protein uS17 family. As to quaternary structure, part of the 30S ribosomal subunit.

In terms of biological role, one of the primary rRNA binding proteins, it binds specifically to the 5'-end of 16S ribosomal RNA. In Synechococcus sp. (strain CC9311), this protein is Small ribosomal subunit protein uS17.